The primary structure comprises 217 residues: Putative 8-oxo-dGTP diphosphatase 3 (217 aa).

Residues 30–164 (GRYGAAGLLL…PGFAASWQRL (135 aa)) enclose the Nudix hydrolase domain. The interval 67–92 (LPGGARDSHETPEQTAVRESSEEAGL) is disordered. Positions 70, 85, 88, and 89 each coordinate Mg(2+). Positions 70 to 91 (GARDSHETPEQTAVRESSEEAG) match the Nudix box motif.

The protein belongs to the Nudix hydrolase family. Requires Mg(2+) as cofactor. The cofactor is Mn(2+).

It catalyses the reaction 8-oxo-dGTP + H2O = 8-oxo-dGMP + diphosphate + H(+). In terms of biological role, may be involved in the GO system responsible for removing an oxidatively damaged form of guanine (7,8-dihydro-8-oxoguanine, 8-oxo-dGTP) from DNA and the nucleotide pool. 8-oxo-dGTP is inserted opposite dA and dC residues of template DNA with almost equal efficiency thus leading to A.T to G.C transversions. MutT specifically degrades 8-oxo-dGTP to the monophosphate. In Mycobacterium tuberculosis (strain CDC 1551 / Oshkosh), this protein is Putative 8-oxo-dGTP diphosphatase 3 (mutT3).